The sequence spans 289 residues: Protease HtpX homolog (289 aa).

Helical transmembrane passes span Thr7–Ile26 and Gly31–Tyr48. His132 lines the Zn(2+) pocket. Glu133 is a catalytic residue. A Zn(2+)-binding site is contributed by His136. The next 2 helical transmembrane spans lie at Val151 to Gly171 and Leu182 to Ile202. A Zn(2+)-binding site is contributed by Glu207.

This sequence belongs to the peptidase M48B family. Zn(2+) serves as cofactor.

It localises to the cell inner membrane. This chain is Protease HtpX homolog, found in Nostoc punctiforme (strain ATCC 29133 / PCC 73102).